Reading from the N-terminus, the 228-residue chain is Sodium channel regulatory subunit beta-4 (228 aa).

The first 30 residues, 1 to 30 (MSRAGNRGNTQARWLGIGLLGLFLLPMYLS), serve as a signal peptide directing secretion. Residues 31–148 (LEVSVGKATT…KDLNNSATIF (118 aa)) form the Ig-like C2-type domain. The Extracellular segment spans residues 31–161 (LEVSVGKATT…VDKLEEVDNT (131 aa)). N-linked (GlcNAc...) asparagine glycans are attached at residues N45, N71, N113, and N142. Cysteines 53 and 131 form a disulfide. Residues 162–182 (VTLIILAVVGGVIGLLVCILL) traverse the membrane as a helical segment. Over 183–228 (LKKLITFILKKTREKKKECLVSSSGNDNTENGLPGSKAEEKPPTKV) the chain is Cytoplasmic. Positions 199 to 228 (KECLVSSSGNDNTENGLPGSKAEEKPPTKV) are disordered. Over residues 203 to 213 (VSSSGNDNTEN) the composition is skewed to polar residues. The segment covering 219-228 (KAEEKPPTKV) has biased composition (basic and acidic residues).

It belongs to the sodium channel auxiliary subunit SCN4B (TC 8.A.17) family. In terms of assembly, a voltage-gated sodium (Nav) channel consists of an ion-conducting pore-forming alpha subunit functional on its own that is regulated by one or more beta subunits. The beta subunit SCN4B is disulfide-linked to the pore-forming alpha subunit. Interacts with SCN1A; regulatory subunit of SCN1A/Nav1.1. Interacts with SCN2A; regulatory subunit of SCN2A/Nav1.2. In terms of processing, contains an interchain disulfide bond with SCN2A. Expressed at a high level in dorsal root ganglia, at a lower level in brain, spinal cord, skeletal muscle and heart.

It localises to the cell membrane. Functionally, regulatory subunit of multiple voltage-gated sodium (Nav) channels directly mediating the depolarization of excitable membranes. Navs, also called VGSCs (voltage-gated sodium channels) or VDSCs (voltage-dependent sodium channels), operate by switching between closed and open conformations depending on the voltage difference across the membrane. In the open conformation they allow Na(+) ions to selectively pass through the pore, along their electrochemical gradient. The influx of Na+ ions provokes membrane depolarization, initiating the propagation of electrical signals throughout cells and tissues. The accessory beta subunits participate in localization and functional modulation of the Nav channels. Modulates the activity of SCN1A/Nav1.1. Modulates the activity of SCN2A/Nav1.2. The sequence is that of Sodium channel regulatory subunit beta-4 from Rattus norvegicus (Rat).